Here is a 177-residue protein sequence, read N- to C-terminus: Large ribosomal subunit protein uL16 (177 aa).

This sequence belongs to the universal ribosomal protein uL16 family.

The sequence is that of Large ribosomal subunit protein uL16 from Natronomonas pharaonis (strain ATCC 35678 / DSM 2160 / CIP 103997 / JCM 8858 / NBRC 14720 / NCIMB 2260 / Gabara) (Halobacterium pharaonis).